A 296-amino-acid chain; its full sequence is Circadian clock oscillator protein KaiA (296 aa).

The segment at 2–133 (ARPGLTIALL…LRQGRADGRS (132 aa)) is psR domain, binds oxidized quinones. The region spanning 2 to 152 (ARPGLTIALL…KLSRRLQERL (151 aa)) is the KaiA N-terminal domain. The interval 153-161 (GYLGVFYKR) is flexible linker. In terms of domain architecture, KaiA C-terminal spans 162-270 (DPSRFLGSLP…CEMYRRSIPP (109 aa)).

As to quaternary structure, homodimer. The KaiABC complex composition changes during the circadian cycle to control KaiC phosphorylation. Complexes KaiC(6), KaiA(2-4):KaiC(6), KaiB(6):KaiC(6) and KaiC(6):KaiB(6):KaiA(12) are among the most important forms, many form cooperatively. KaiA and CikA bind to the same region of the KaiB(fs) form and therefore compete.

In terms of biological role, key component of the KaiABC oscillator complex, which constitutes the main circadian regulator in cyanobacteria. Complex composition changes during the circadian cycle to control KaiC phosphorylation. KaiA stimulates KaiC autophosphorylation, while KaiB sequesters KaiA, leading to KaiC autodephosphorylation. KaiA binding to the KaiC CII domain during the subjective day yields KaiA(2-4):KaiC(6) complexes which stimulate KaiC autophosphorylation. Phospho-Ser-431 KaiC accumulation triggers binding of KaiB during the subjective night to form the KaiB(6):KaiC(6) complex, leading to changes in the output regulators CikA and SasA. KaiB(6):KaiC(6) formation exposes a site for KaiA binding on KaiB that sequesters KaiA from KaiC's CII domain, making the KaiC(6):KaiB(6):KaiA(12) complex resulting in KaiC autodephosphorylation. Complete dephosphorylation of KaiC leads to dissociation of KaiA(2):KaiB(1), completing 1 cycle of the Kai oscillator. Its function is as follows. Binds oxidized quinones via the N-terminal PsR domain, allowing it to sense redox changes and possibly mediate clock input. This chain is Circadian clock oscillator protein KaiA, found in Parasynechococcus marenigrum (strain WH8102).